The following is a 557-amino-acid chain: Putative glutathione-regulated potassium-efflux system protein KefB (557 aa).

Transmembrane regions (helical) follow at residues 2-22 (LGYL…ISDV), 24-44 (EILH…GLEL), 56-76 (IFGV…GLLM), 84-104 (AAVV…LQLM), 121-141 (VLLF…LLAG), 146-166 (HFDW…LIGG), 176-196 (FIAA…LVLG), 199-219 (LFMD…GVLL), 237-257 (GLLL…GVLY), and 260-280 (LLWV…VLYL). An RCK N-terminal domain is found at 356 to 475 (KPQVIVVGFG…AGVTQFSRET (120 aa)).

This sequence belongs to the monovalent cation:proton antiporter 2 (CPA2) transporter (TC 2.A.37) family. KefB subfamily. In terms of assembly, interacts with the regulatory subunit KefG.

Its subcellular location is the cell inner membrane. In terms of biological role, pore-forming subunit of a potassium efflux system that confers protection against electrophiles. Catalyzes K(+)/H(+) antiport. The chain is Putative glutathione-regulated potassium-efflux system protein KefB from Shigella flexneri.